The sequence spans 1190 residues: DNA-directed RNA polymerase subunit beta (1190 aa).

This sequence belongs to the RNA polymerase beta chain family. As to quaternary structure, the RNAP catalytic core consists of 2 alpha, 1 beta, 1 beta' and 1 omega subunit. When a sigma factor is associated with the core the holoenzyme is formed, which can initiate transcription.

The catalysed reaction is RNA(n) + a ribonucleoside 5'-triphosphate = RNA(n+1) + diphosphate. Functionally, DNA-dependent RNA polymerase catalyzes the transcription of DNA into RNA using the four ribonucleoside triphosphates as substrates. The chain is DNA-directed RNA polymerase subunit beta from Streptococcus suis (strain 98HAH33).